The following is a 580-amino-acid chain: (3S,6E)-nerolidol synthase 1, chloroplastic (580 aa).

A chloroplast-targeting transit peptide spans 1–31 (MASSSWAFFKVFNPQIAPKSISHIGQSDLMQ). 5 residues coordinate Mg(2+): D334, D338, D478, S482, and E486. The DDXXD motif signature appears at 334 to 338 (DDIFD).

The protein belongs to the terpene synthase family. Tpsg subfamily. The cofactor is Mg(2+). Mn(2+) serves as cofactor.

Its subcellular location is the plastid. The protein localises to the chloroplast. The enzyme catalyses (2E,6E)-farnesyl diphosphate + H2O = (3S,6E)-nerolidol + diphosphate. Its pathway is secondary metabolite biosynthesis; terpenoid biosynthesis. Its function is as follows. Involved in monoterpene (C10) and sesquiterpene (C15) biosynthesis. Converts geranyl diphosphate (GPP) into S-linalool and farnesyl diphosphate (FPP) into (3S)-E-nerolidol. Probably not expressed in wild strawberry species. This is (3S,6E)-nerolidol synthase 1, chloroplastic from Fragaria vesca (Woodland strawberry).